The following is a 372-amino-acid chain: Non-structural protein NS2 (372 aa).

The disordered stretch occupies residues 259–326 (NQIEKQHTTH…QESEPESPSF (68 aa)). The segment covering 299–309 (TETTSTSSSHH) has biased composition (low complexity).

The protein is Non-structural protein NS2 (NS) of Aedes albopictus (Asian tiger mosquito).